A 353-amino-acid polypeptide reads, in one-letter code: Ribosomal RNA small subunit methyltransferase H (353 aa).

Residues 39–41 (AGH), Asp58, Phe90, Asp108, and Gln115 contribute to the S-adenosyl-L-methionine site. Positions 334–353 (SEDGVRGAHGHRRRTQARRG) are disordered. Residues 341–353 (AHGHRRRTQARRG) show a composition bias toward basic residues.

The protein belongs to the methyltransferase superfamily. RsmH family.

It is found in the cytoplasm. It catalyses the reaction cytidine(1402) in 16S rRNA + S-adenosyl-L-methionine = N(4)-methylcytidine(1402) in 16S rRNA + S-adenosyl-L-homocysteine + H(+). Functionally, specifically methylates the N4 position of cytidine in position 1402 (C1402) of 16S rRNA. The sequence is that of Ribosomal RNA small subunit methyltransferase H from Bifidobacterium animalis subsp. lactis (strain AD011).